Reading from the N-terminus, the 332-residue chain is NADH-quinone oxidoreductase subunit H (332 aa).

9 consecutive transmembrane segments (helical) span residues 4 to 24, 44 to 64, 78 to 98, 120 to 140, 165 to 185, 194 to 214, 255 to 275, 279 to 299, and 312 to 332; these read FAFF…IFAS, IGPD…MIKL, FIFA…LAAI, VALL…FLGG, VGAL…LVDI, FSWL…ALFI, IAGA…FWII, IMMI…RAAF, and YLIL…TVLL.

It belongs to the complex I subunit 1 family. In terms of assembly, NDH-1 is composed of 14 different subunits. Subunits NuoA, H, J, K, L, M, N constitute the membrane sector of the complex.

It is found in the cell inner membrane. The catalysed reaction is a quinone + NADH + 5 H(+)(in) = a quinol + NAD(+) + 4 H(+)(out). NDH-1 shuttles electrons from NADH, via FMN and iron-sulfur (Fe-S) centers, to quinones in the respiratory chain. The immediate electron acceptor for the enzyme in this species is believed to be ubiquinone. Couples the redox reaction to proton translocation (for every two electrons transferred, four hydrogen ions are translocated across the cytoplasmic membrane), and thus conserves the redox energy in a proton gradient. This subunit may bind ubiquinone. The polypeptide is NADH-quinone oxidoreductase subunit H (Campylobacter jejuni subsp. jejuni serotype O:2 (strain ATCC 700819 / NCTC 11168)).